The chain runs to 93 residues: LSM complex subunit lsm3 (93 aa).

Residues 9-93 form the Sm domain; the sequence is EPLDLVRLSL…SVILIAPPRN (85 aa). Ser-84 bears the Phosphoserine mark.

Belongs to the snRNP Sm proteins family. In terms of assembly, component of the heptameric LSM1-LSM7 complex that forms a seven-membered ring structure with a donut shape. The LSm subunits are arranged in the order lsm1, lsm2, lsm3, lsm6, lsm5, lsm7 and lsm4. Component of the heptameric LSM2-LSM8 complex that forms a seven-membered ring structure with a donut shape. The LSm subunits are arranged in the order lsm8, lsm2, lsm3, lsm6, lsm5, lsm7 and lsm4.

It is found in the nucleus. The protein localises to the cytoplasm. Functionally, component of LSm protein complexes, which are involved in RNA processing and may function in a chaperone-like manner. Component of the cytoplasmic LSM1-LSM7 complex which is involved in mRNA degradation by activating the decapping step. The LSM1-LSM7 complex loads onto the 3'-end of single stranded RNA. Component of the nuclear LSM2-LSM8 complex, which is involved in spliceosome assembly. The LSM2-LSM8 complex plays a role in the biogenesis of the spliceosomal U4/U6-U5 tri-snRNP complex by accelerating prp24-mediated annealing of U4/U6 di-snRNA. The LSM2-LSM8 complex binds U6 snRNA terminating with a cyclic 2',3' phosphate group; RNA with an unmodified 3' hydroxyl or non-cyclic 3' phosphate is bound less tightly. This Schizosaccharomyces pombe (strain 972 / ATCC 24843) (Fission yeast) protein is LSM complex subunit lsm3 (lsm3).